The following is a 264-amino-acid chain: Thymidylate synthase (264 aa).

Arg-21 serves as a coordination point for dUMP. His-51 provides a ligand contact to (6R)-5,10-methylene-5,6,7,8-tetrahydrofolate. DUMP is bound at residue 126-127; that stretch reads RR. The active-site Nucleophile is Cys-146. DUMP contacts are provided by residues 166–169, Asn-177, and 207–209; these read RSVD and HLY. Position 169 (Asp-169) interacts with (6R)-5,10-methylene-5,6,7,8-tetrahydrofolate. Ala-263 contributes to the (6R)-5,10-methylene-5,6,7,8-tetrahydrofolate binding site.

Belongs to the thymidylate synthase family. Bacterial-type ThyA subfamily. As to quaternary structure, homodimer.

It is found in the cytoplasm. It catalyses the reaction dUMP + (6R)-5,10-methylene-5,6,7,8-tetrahydrofolate = 7,8-dihydrofolate + dTMP. The protein operates within pyrimidine metabolism; dTTP biosynthesis. Catalyzes the reductive methylation of 2'-deoxyuridine-5'-monophosphate (dUMP) to 2'-deoxythymidine-5'-monophosphate (dTMP) while utilizing 5,10-methylenetetrahydrofolate (mTHF) as the methyl donor and reductant in the reaction, yielding dihydrofolate (DHF) as a by-product. This enzymatic reaction provides an intracellular de novo source of dTMP, an essential precursor for DNA biosynthesis. This chain is Thymidylate synthase, found in Geobacillus thermodenitrificans (strain NG80-2).